Reading from the N-terminus, the 105-residue chain is MPLSPGLLLLLLSGATATAALPLEGGPTGRDSEHMQEAAGIRKSSLLTFLAWWFEWTSQASAGPLIGEEAREVARRQEGAPPQQSARRDRMPCRNFFWKTFSSCK.

Positions 1–18 (MPLSPGLLLLLLSGATAT) are cleaved as a signal peptide. A propeptide spanning residues 19–74 (AALPLEGGPTGRDSEHMQEAAGIRKSSLLTFLAWWFEWTSQASAGPLIGEEAREVA) is cleaved from the precursor. A disulfide bond links cysteine 93 and cysteine 104.

It belongs to the somatostatin family. As to expression, expressed in a subset of GABAergic cells in the cortex and hippocampus.

It is found in the secreted. In terms of biological role, binds to all human somatostatin receptor (SSTR) subtypes. It also inhibits cAMP production induced by forskolin through SSTRs. In Homo sapiens (Human), this protein is Cortistatin (CORT).